Consider the following 1171-residue polypeptide: ATP-dependent helicase/deoxyribonuclease subunit B (1171 aa).

The 343-residue stretch at methionine 1–arginine 343 folds into the UvrD-like helicase ATP-binding domain. Glycine 8–serine 15 provides a ligand contact to ATP. A UvrD-like helicase C-terminal domain is found at methionine 281–aspartate 587. [4Fe-4S] cluster contacts are provided by cysteine 805, cysteine 1129, cysteine 1132, and cysteine 1138.

It belongs to the helicase family. AddB/RexB type 1 subfamily. In terms of assembly, heterodimer of AddA and AddB. Mg(2+) is required as a cofactor. Requires [4Fe-4S] cluster as cofactor.

In terms of biological role, the heterodimer acts as both an ATP-dependent DNA helicase and an ATP-dependent, dual-direction single-stranded exonuclease. Recognizes the chi site generating a DNA molecule suitable for the initiation of homologous recombination. The AddB subunit has 5' -&gt; 3' nuclease activity but not helicase activity. In Bacillus thuringiensis subsp. konkukian (strain 97-27), this protein is ATP-dependent helicase/deoxyribonuclease subunit B.